Reading from the N-terminus, the 702-residue chain is Polyribonucleotide nucleotidyltransferase (702 aa).

Positions 485 and 491 each coordinate Mg(2+). The KH domain occupies 552–612; it reads PRTEIICIDP…EGVKKAISII (61 aa). The S1 motif domain occupies 622–690; sequence GEIYLGKVTK…NQGRINLSRK (69 aa).

This sequence belongs to the polyribonucleotide nucleotidyltransferase family. It depends on Mg(2+) as a cofactor.

It localises to the cytoplasm. It catalyses the reaction RNA(n+1) + phosphate = RNA(n) + a ribonucleoside 5'-diphosphate. Involved in mRNA degradation. Catalyzes the phosphorolysis of single-stranded polyribonucleotides processively in the 3'- to 5'-direction. The sequence is that of Polyribonucleotide nucleotidyltransferase from Clostridium botulinum (strain Loch Maree / Type A3).